Reading from the N-terminus, the 914-residue chain is Inter-alpha-trypsin inhibitor heavy chain H1 (914 aa).

The signal sequence occupies residues 1 to 30; sequence MDGAAVGLRVLLGLGLVSLLTLEAMPAAWG. Positions 31–36 are excised as a propeptide; it reads LATTGR. The 130-residue stretch at 39-168 folds into the VIT domain; that stretch reads AREKRQAVDT…KATFQLTYEE (130 aa). The S-linked (Hex...) cysteine glycan is linked to Cys-62. Ser-131 carries the phosphoserine modification. N-linked (GlcNAc...) asparagine glycosylation is found at Asn-288 and Asn-291. Residues 293-453 enclose the VWFA domain; sequence SKNLVFVIDI…FNFLEVMSME (161 aa). Phosphothreonine occurs at positions 405 and 410. The N-linked (GlcNAc...) asparagine glycan is linked to Asn-591. The O-linked (GalNAc...) threonine glycan is linked to Thr-656. Asp-675 is modified (aspartate 1-(chondroitin 4-sulfate)-ester). The propeptide occupies 676–914; that stretch reads PHFIIYVPQK…HTDYIVPDIF (239 aa).

Belongs to the ITIH family. I-alpha-I plasma protease inhibitors are assembled from one or two heavy chains (HC) and one light chain, bikunin. Inter-alpha-inhibitor (I-alpha-I) is composed of ITIH1/HC1, ITIH2/HC2 and bikunin. Interacts with TNFAIP6 (via Link and CUB domains). Heavy chains are linked to bikunin via chondroitin 4-sulfate esterified to the alpha-carboxyl of the C-terminal aspartate after propeptide cleavage. Post-translationally, the S-linked glycan is composed of two 6-carbon sugars, possibly Glc or Gal.

Its subcellular location is the secreted. In terms of biological role, may act as a carrier of hyaluronan in serum or as a binding protein between hyaluronan and other matrix protein, including those on cell surfaces in tissues to regulate the localization, synthesis and degradation of hyaluronan which are essential to cells undergoing biological processes. The sequence is that of Inter-alpha-trypsin inhibitor heavy chain H1 (ITIH1) from Mesocricetus auratus (Golden hamster).